Here is a 411-residue protein sequence, read N- to C-terminus: Lissencephaly-1 homolog (411 aa).

In terms of domain architecture, LisH spans 9–41 (QREELNQAIADYLGSNGYADSLETFRKEADLST). Residues 56-83 (TSVIRLQKKVMELEAKLTEAEKEVIEGA) adopt a coiled-coil conformation. WD repeat units lie at residues 106–147 (GHRA…RSLK), 148–187 (GHTDSVQDVAFDAQGKLLASCSADLSIKLWDFQQSYECIK), 191–230 (GHDHNVSSVAFVPAGDYVLSASRDRTIKMWEVATGYCVKT), 233–272 (GHREWVRMVRVHIEGSIFATCSNDQTIRVWLTNSKDCKVE), 275–334 (DHEH…CLLT), 337–376 (GHDNWVRGLAFHPGGKYLVSASDDKTIRVWDLRNKRCMKT), and 379–411 (AHQHFCTSIDFHKAHPYVISGSVDQTVKVWECR).

It belongs to the WD repeat LIS1/nudF family.

It is found in the cytoplasm. It localises to the cytoskeleton. Its subcellular location is the microtubule organizing center. The protein resides in the centrosome. Positively regulates the activity of the minus-end directed microtubule motor protein dynein. May enhance dynein-mediated microtubule sliding by targeting dynein to the microtubule plus end. Required for several dynein- and microtubule-dependent processes. The polypeptide is Lissencephaly-1 homolog (Drosophila sechellia (Fruit fly)).